The chain runs to 75 residues: Conotoxin TsMEKL-011 (75 aa).

The signal sequence occupies residues 1-19; it reads MEKLTILLLVAAVLMSTQA. Positions 20-45 are excised as a propeptide; it reads LIQRGGAKRRKVNFFSIREPGAEDWR. 3 disulfides stabilise this stretch: Cys49/Cys63, Cys56/Cys67, and Cys62/Cys71.

This sequence belongs to the conotoxin O2 superfamily. As to expression, expressed by the venom duct.

The protein resides in the secreted. This chain is Conotoxin TsMEKL-011, found in Conus tessulatus (Tessellate cone).